Here is a 286-residue protein sequence, read N- to C-terminus: Shikimate dehydrogenase (NADP(+)) (286 aa).

Residues 20–22 and Thr65 each bind shikimate; that span reads SLS. The Proton acceptor role is filled by Lys69. Asp81 lines the NADP(+) pocket. Shikimate contacts are provided by Asn90 and Asp105. NADP(+) is bound by residues 128 to 132 and Thr217; that span reads GAGGA. Residue Tyr219 coordinates shikimate. NADP(+) is bound at residue Gly240.

Belongs to the shikimate dehydrogenase family. In terms of assembly, homodimer.

It catalyses the reaction shikimate + NADP(+) = 3-dehydroshikimate + NADPH + H(+). The protein operates within metabolic intermediate biosynthesis; chorismate biosynthesis; chorismate from D-erythrose 4-phosphate and phosphoenolpyruvate: step 4/7. In terms of biological role, involved in the biosynthesis of the chorismate, which leads to the biosynthesis of aromatic amino acids. Catalyzes the reversible NADPH linked reduction of 3-dehydroshikimate (DHSA) to yield shikimate (SA). The chain is Shikimate dehydrogenase (NADP(+)) from Syntrophobacter fumaroxidans (strain DSM 10017 / MPOB).